The primary structure comprises 527 residues: NAD(P)H-quinone oxidoreductase chain 4 1 (527 aa).

13 helical membrane passes run F6 to I26, W36 to S56, L91 to F111, P113 to V133, L136 to I156, F169 to F189, L212 to H232, T243 to L263, A275 to T295, I306 to D326, G331 to G351, L387 to T407, and V417 to M437.

It belongs to the complex I subunit 4 family.

It localises to the cellular thylakoid membrane. It catalyses the reaction a plastoquinone + NADH + (n+1) H(+)(in) = a plastoquinol + NAD(+) + n H(+)(out). The enzyme catalyses a plastoquinone + NADPH + (n+1) H(+)(in) = a plastoquinol + NADP(+) + n H(+)(out). Its function is as follows. NDH-1 shuttles electrons from NAD(P)H, via FMN and iron-sulfur (Fe-S) centers, to quinones in the respiratory chain. The immediate electron acceptor for the enzyme in this species is believed to be plastoquinone. Couples the redox reaction to proton translocation (for every two electrons transferred, four hydrogen ions are translocated across the cytoplasmic membrane), and thus conserves the redox energy in a proton gradient. In Microcystis aeruginosa (strain NIES-843 / IAM M-2473), this protein is NAD(P)H-quinone oxidoreductase chain 4 1.